A 409-amino-acid polypeptide reads, in one-letter code: Elongation factor Tu, chloroplastic (409 aa).

In terms of domain architecture, tr-type G spans 10–214; that stretch reads KQHVNIGTIG…NVDTYIPTPV (205 aa). A G1 region spans residues 19–26; that stretch reads GHVDHGKT. 19 to 26 contributes to the GTP binding site; that stretch reads GHVDHGKT. Thr-26 lines the Mg(2+) pocket. Residues 60-64 are G2; the sequence is GITIN. Positions 81 to 84 are G3; sequence DCPG. GTP contacts are provided by residues 81-85 and 136-139; these read DCPGH and NKED. Residues 136–139 form a G4 region; that stretch reads NKED. A G5 region spans residues 174 to 176; it reads SAL.

Belongs to the TRAFAC class translation factor GTPase superfamily. Classic translation factor GTPase family. EF-Tu/EF-1A subfamily.

It localises to the plastid. Its subcellular location is the chloroplast. The catalysed reaction is GTP + H2O = GDP + phosphate + H(+). GTP hydrolase that promotes the GTP-dependent binding of aminoacyl-tRNA to the A-site of ribosomes during protein biosynthesis. The chain is Elongation factor Tu, chloroplastic (tufA) from Tupiella akineta (Green alga).